The chain runs to 119 residues: Large ribosomal subunit protein bL20 (119 aa).

This sequence belongs to the bacterial ribosomal protein bL20 family.

Functionally, binds directly to 23S ribosomal RNA and is necessary for the in vitro assembly process of the 50S ribosomal subunit. It is not involved in the protein synthesizing functions of that subunit. The chain is Large ribosomal subunit protein bL20 from Acidovorax ebreus (strain TPSY) (Diaphorobacter sp. (strain TPSY)).